Consider the following 153-residue polypeptide: 6,7-dimethyl-8-ribityllumazine synthase (153 aa).

Residues F21, 55 to 57 (AFE), and 79 to 81 (TVI) contribute to the 5-amino-6-(D-ribitylamino)uracil site. Residue 84–85 (AT) coordinates (2S)-2-hydroxy-3-oxobutyl phosphate. H87 (proton donor) is an active-site residue. F112 lines the 5-amino-6-(D-ribitylamino)uracil pocket. (2S)-2-hydroxy-3-oxobutyl phosphate is bound at residue R126.

The protein belongs to the DMRL synthase family. Forms an icosahedral capsid composed of 60 subunits, arranged as a dodecamer of pentamers.

The catalysed reaction is (2S)-2-hydroxy-3-oxobutyl phosphate + 5-amino-6-(D-ribitylamino)uracil = 6,7-dimethyl-8-(1-D-ribityl)lumazine + phosphate + 2 H2O + H(+). Its pathway is cofactor biosynthesis; riboflavin biosynthesis; riboflavin from 2-hydroxy-3-oxobutyl phosphate and 5-amino-6-(D-ribitylamino)uracil: step 1/2. Catalyzes the formation of 6,7-dimethyl-8-ribityllumazine by condensation of 5-amino-6-(D-ribitylamino)uracil with 3,4-dihydroxy-2-butanone 4-phosphate. This is the penultimate step in the biosynthesis of riboflavin. In Bacillus cereus (strain B4264), this protein is 6,7-dimethyl-8-ribityllumazine synthase.